The primary structure comprises 283 residues: MGQKIHPTGFRLSVTRNWASRWYAGNSNFATMLNEDLKVRAYLKTKLKNASVGRVIIERPAKNARITIYSSRPGVVIGKKGEDIEVLKSALTKMMGVPVHVNIEEIRKPETDAQLIADSIAQQLEKRIMFRRAMKRAMQNAMRLGAQGIKIMSSGRLNGIEIARKEWYREGRVPLHTLRAEIDYGFGEAETTYGIIGIKVWVYKGDRLPSGEPPVDLTKEDDTKRRGPRRDDGKPSSRPRTARPEGQPGAAAAPGAAPAAKRVRAKKPDAAVDGAVPAEKAGE.

One can recognise a KH type-2 domain in the interval 39-107; it reads VRAYLKTKLK…PVHVNIEEIR (69 aa). Residues 209–283 form a disordered region; the sequence is PSGEPPVDLT…GAVPAEKAGE (75 aa). The segment covering 217–235 has biased composition (basic and acidic residues); that stretch reads LTKEDDTKRRGPRRDDGKP. Low complexity predominate over residues 244–260; sequence PEGQPGAAAAPGAAPAA.

The protein belongs to the universal ribosomal protein uS3 family. Part of the 30S ribosomal subunit. Forms a tight complex with proteins S10 and S14.

In terms of biological role, binds the lower part of the 30S subunit head. Binds mRNA in the 70S ribosome, positioning it for translation. This Herminiimonas arsenicoxydans protein is Small ribosomal subunit protein uS3.